A 351-amino-acid polypeptide reads, in one-letter code: Transcription elongation factor A N-terminal and central domain-containing protein (351 aa).

The TFIIS N-terminal domain maps to Asn5–Thr82. 2 disordered regions span residues Ala86 to Ser119 and Leu144 to Pro169. Positions Ser103–Ser119 are enriched in polar residues. The segment covering Lys145–Glu165 has biased composition (basic and acidic residues). Residues Met173 to Gly289 enclose the TFIIS central domain.

The polypeptide is Transcription elongation factor A N-terminal and central domain-containing protein (TCEANC) (Homo sapiens (Human)).